The primary structure comprises 125 residues: Small ribosomal subunit protein uS13 (125 aa).

The segment covering 94–116 (GLPVRGQRTRTNARTRKGPRKAV) has biased composition (basic residues). The interval 94 to 125 (GLPVRGQRTRTNARTRKGPRKAVRASSAKAGR) is disordered.

Belongs to the universal ribosomal protein uS13 family. Part of the 30S ribosomal subunit. Forms a loose heterodimer with protein S19. Forms two bridges to the 50S subunit in the 70S ribosome.

In terms of biological role, located at the top of the head of the 30S subunit, it contacts several helices of the 16S rRNA. In the 70S ribosome it contacts the 23S rRNA (bridge B1a) and protein L5 of the 50S subunit (bridge B1b), connecting the 2 subunits; these bridges are implicated in subunit movement. Contacts the tRNAs in the A and P-sites. This chain is Small ribosomal subunit protein uS13, found in Nitrosospira multiformis (strain ATCC 25196 / NCIMB 11849 / C 71).